A 200-amino-acid polypeptide reads, in one-letter code: Interferon lambda-2 (200 aa).

Positions 1 to 25 (MKLDMTGDCTPVLVLMAAVLTVTGA) are cleaved as a signal peptide.

The protein belongs to the lambda interferon family.

It localises to the secreted. Functionally, cytokine with antiviral, antitumour and immunomodulatory activities. Plays a critical role in the antiviral host defense, predominantly in the epithelial tissues. Acts as a ligand for the heterodimeric class II cytokine receptor composed of IL10RB and IFNLR1, and receptor engagement leads to the activation of the JAK/STAT signaling pathway resulting in the expression of IFN-stimulated genes (ISG), which mediate the antiviral state. Has a restricted receptor distribution and therefore restricted targets: is primarily active in epithelial cells and this cell type-selective action is because of the epithelial cell-specific expression of its receptor IFNLR1. Seems not to be essential for early virus-activated host defense in vaginal infection, but plays an important role in Toll-like receptor (TLR)-induced antiviral defense. Plays a significant role in the antiviral immune defense in the intestinal epithelium. Exerts an immunomodulatory effect by up-regulating MHC class I antigen expression. The sequence is that of Interferon lambda-2 (IFNL2) from Homo sapiens (Human).